The following is a 454-amino-acid chain: 5-hydroxytryptamine receptor 3D (454 aa).

An N-terminal signal peptide occupies residues 1–24 (MQKHSPGPPALALLSQSLLTTGNG). Residues 25 to 232 (DTLIINCPGF…IRRRCRPSPY (208 aa)) lie on the Extracellular side of the membrane. N-linked (GlcNAc...) asparagine glycosylation is present at Asn66. Residues 233 to 253 (VVNFLVPSGILIAIDALSFYL) form a helical membrane-spanning segment. The Cytoplasmic portion of the chain corresponds to 254–264 (PLESGNCAPFK). A helical transmembrane segment spans residues 265–285 (MTVLLGYSVFLLMMNDLLPAT). At 286–306 (STSSHASLVAPLALMQTPLPA) the chain is on the extracellular side. Residues 307 to 327 (GVYFALCLSLMVGSLLETIFI) traverse the membrane as a helical segment. The Cytoplasmic portion of the chain corresponds to 328–431 (THLLHVATTQ…WVQFSHAMDA (104 aa)). Positions 363–410 (PQKGNKGPGLTPTHLPGVKEPEVSAGQMPGPGEAELTGGSEWTRAQRE) are disordered. Positions 399–430 (TGGSEWTRAQREHEAQKQHSVELWVQFSHAMD) are HA-stretch; determines single-channel conductance in 5-HT3 receptors. A helical transmembrane segment spans residues 432 to 452 (LLFRLYLLFMASSIITVICLW). Residues 453–454 (NT) are Extracellular-facing.

It belongs to the ligand-gated ion channel (TC 1.A.9) family. 5-hydroxytryptamine receptor (TC 1.A.9.2) subfamily. HTR3D sub-subfamily. Forms homopentameric as well as heteropentameric serotonin-activated cation-selective channel complexes with HTR3A. The homomeric complex is not functional. Heteropentameric complexes display properties which resemble that of neuronal serotonin-activated channels in vivo. In terms of tissue distribution, expressed in liver, as well as fetal and adult colon and kidney.

It localises to the postsynaptic cell membrane. Its subcellular location is the cell membrane. The catalysed reaction is Na(+)(in) = Na(+)(out). It catalyses the reaction K(+)(in) = K(+)(out). The enzyme catalyses Ca(2+)(in) = Ca(2+)(out). Its function is as follows. Forms serotonin (5-hydroxytryptamine/5-HT3)-activated cation-selective channel complexes, which when activated cause fast, depolarizing responses in neurons. The chain is 5-hydroxytryptamine receptor 3D from Homo sapiens (Human).